The sequence spans 883 residues: Probable ribonuclease ZC3H12C (883 aa).

2 disordered regions span residues 53-109 (QLSP…ISVE) and 139-158 (DFKPEESQTTSKEAKKPPDV). Ser-230 is subject to Phosphoserine. Positions 245–400 (LRPIVIDGSN…LGRHGPSLDN (156 aa)) constitute an RNase NYN domain. The C3H1-type zinc finger occupies 410 to 435 (EHKKQPCPYGKKCTYGHKCKYYHPER). 3 disordered regions span residues 456–551 (AKTA…FPPQ), 680–738 (FHDP…KAPH), and 754–775 (SRLYDSSPSRQRKPYSRQEGLG). Residues 466-477 (KSNSVPCSTKAD) are compositionally biased toward polar residues. Basic and acidic residues predominate over residues 503–515 (LEEKLPTKNKLET). Residues 517 to 542 (SVPSLVSIPATSTAKPQSTTSLSNGL) are compositionally biased toward polar residues. The span at 705–714 (HLALHLPHSA) shows a compositional bias: low complexity.

The protein belongs to the ZC3H12 family. Mg(2+) serves as cofactor.

Functionally, may function as RNase and regulate the levels of target RNA species. This is Probable ribonuclease ZC3H12C (ZC3H12C) from Homo sapiens (Human).